The chain runs to 305 residues: Probable cell division protein WhiA (305 aa).

A DNA-binding region (H-T-H motif) is located at residues Thr269–Lys302.

The protein belongs to the WhiA family.

In terms of biological role, involved in cell division and chromosome segregation. The polypeptide is Probable cell division protein WhiA (Lactococcus lactis subsp. cremoris (strain MG1363)).